The chain runs to 229 residues: Ribosomal RNA large subunit methyltransferase E (229 aa).

The segment at 1 to 20 (MSRAGNGGRQRIKTAKGRSA) is disordered. Residues Gly75, Trp77, Asp94, Asp110, and Asp134 each contribute to the S-adenosyl-L-methionine site. Lys174 acts as the Proton acceptor in catalysis.

Belongs to the class I-like SAM-binding methyltransferase superfamily. RNA methyltransferase RlmE family.

The protein resides in the cytoplasm. It catalyses the reaction uridine(2552) in 23S rRNA + S-adenosyl-L-methionine = 2'-O-methyluridine(2552) in 23S rRNA + S-adenosyl-L-homocysteine + H(+). Its function is as follows. Specifically methylates the uridine in position 2552 of 23S rRNA at the 2'-O position of the ribose in the fully assembled 50S ribosomal subunit. This is Ribosomal RNA large subunit methyltransferase E from Rhizorhabdus wittichii (strain DSM 6014 / CCUG 31198 / JCM 15750 / NBRC 105917 / EY 4224 / RW1) (Sphingomonas wittichii).